The chain runs to 418 residues: 3-deoxy-D-manno-octulosonic acid transferase (418 aa).

Residues 7–27 (FLSFLLLPIYFVIIFIRLLIG) traverse the membrane as a helical; Signal-anchor segment. Glu-60 functions as the Proton acceptor in the catalytic mechanism. Residues 264-265 (PR), 305-307 (FGE), and 330-333 (NILE) contribute to the CMP site.

The protein belongs to the glycosyltransferase group 1 family. Glycosyltransferase 30 subfamily.

Its subcellular location is the cell inner membrane. The enzyme catalyses lipid IVA (E. coli) + CMP-3-deoxy-beta-D-manno-octulosonate = alpha-Kdo-(2-&gt;6)-lipid IVA (E. coli) + CMP + H(+). The protein operates within bacterial outer membrane biogenesis; LPS core biosynthesis. Involved in lipopolysaccharide (LPS) biosynthesis. Catalyzes the transfer of 3-deoxy-D-manno-octulosonate (Kdo) residue(s) from CMP-Kdo to lipid IV(A), the tetraacyldisaccharide-1,4'-bisphosphate precursor of lipid A. The chain is 3-deoxy-D-manno-octulosonic acid transferase (waaA) from Rickettsia bellii (strain RML369-C).